A 95-amino-acid chain; its full sequence is Small ribosomal subunit protein bS16 (95 aa).

The protein belongs to the bacterial ribosomal protein bS16 family.

This is Small ribosomal subunit protein bS16 from Thermotoga maritima (strain ATCC 43589 / DSM 3109 / JCM 10099 / NBRC 100826 / MSB8).